A 165-amino-acid polypeptide reads, in one-letter code: Large ribosomal subunit protein uL11 (165 aa).

R67 carries the post-translational modification N5-methylarginine.

This sequence belongs to the universal ribosomal protein uL11 family. Component of the large ribosomal subunit (LSU). Mature N.crassa ribosomes consist of a small (40S) and a large (60S) subunit. The 40S small subunit contains 1 molecule of ribosomal RNA (18S rRNA) and at least 32 different proteins. The large 60S subunit contains 3 rRNA molecules (26S, 5.8S and 5S rRNA) and at least 42 different proteins.

Its subcellular location is the cytoplasm. Component of the ribosome, a large ribonucleoprotein complex responsible for the synthesis of proteins in the cell. The small ribosomal subunit (SSU) binds messenger RNAs (mRNAs) and translates the encoded message by selecting cognate aminoacyl-transfer RNA (tRNA) molecules. The large subunit (LSU) contains the ribosomal catalytic site termed the peptidyl transferase center (PTC), which catalyzes the formation of peptide bonds, thereby polymerizing the amino acids delivered by tRNAs into a polypeptide chain. The nascent polypeptides leave the ribosome through a tunnel in the LSU and interact with protein factors that function in enzymatic processing, targeting, and the membrane insertion of nascent chains at the exit of the ribosomal tunnel. This Neurospora crassa (strain ATCC 24698 / 74-OR23-1A / CBS 708.71 / DSM 1257 / FGSC 987) protein is Large ribosomal subunit protein uL11 (rpl-12).